The primary structure comprises 365 residues: tRNA(Met) cytidine acetate ligase (365 aa).

ATP is bound by residues 7 to 20, Gly-96, Asn-152, and Arg-175; that span reads IAEF…HKYL.

Belongs to the TmcAL family.

It is found in the cytoplasm. It catalyses the reaction cytidine(34) in elongator tRNA(Met) + acetate + ATP = N(4)-acetylcytidine(34) in elongator tRNA(Met) + AMP + diphosphate. Catalyzes the formation of N(4)-acetylcytidine (ac(4)C) at the wobble position of elongator tRNA(Met), using acetate and ATP as substrates. First activates an acetate ion to form acetyladenylate (Ac-AMP) and then transfers the acetyl group to tRNA to form ac(4)C34. In Streptococcus pneumoniae serotype 19F (strain G54), this protein is tRNA(Met) cytidine acetate ligase.